Here is a 996-residue protein sequence, read N- to C-terminus: Sodium/potassium-transporting ATPase subunit alpha-A (996 aa).

2 helical membrane passes run 73-93 (LFGGFQMLLWIGSILCFIAYT) and 107-123 (LYLGLALLFVVIMTGCF). The disordered stretch occupies residues 191–211 (DNSSLTGESEPQSRSTECTND). A run of 2 helical transmembrane segments spans residues 268–290 (FIHIITAMAVSLAAVFAVISFLY) and 297–325 (AAIFMIGIIVAKVPEGLLATVTVCLTLTA). The active-site 4-aspartylphosphate intermediate is the D353. Residue K483 participates in ATP binding. D692 and D696 together coordinate Mg(2+). 4 consecutive transmembrane segments (helical) span residues 762 to 785 (LSPFLMYILFDLPLAIGTVTILCI), 820 to 847 (ERLISMAYGQIGVMQAFGGFFTYFVIMG), 889 to 909 (YTCHTAFFISIVIVQWTDLII), and 926 to 951 (TLNFALVFETCVAAFLSYTPGMDKGL).

The protein belongs to the cation transport ATPase (P-type) (TC 3.A.3) family. Type IIC subfamily. As to quaternary structure, the sodium/potassium-transporting ATPase is composed of a catalytic alpha subunit, an auxiliary non-catalytic beta subunit and an additional regulatory subunit.

The protein localises to the cell membrane. The enzyme catalyses K(+)(out) + Na(+)(in) + ATP + H2O = K(+)(in) + Na(+)(out) + ADP + phosphate + H(+). Functionally, this is the catalytic component of the active enzyme, which catalyzes the hydrolysis of ATP coupled with the exchange of sodium and potassium ions across the plasma membrane. This action creates the electrochemical gradient of sodium and potassium ions, providing the energy for active transport of various nutrients. The sequence is that of Sodium/potassium-transporting ATPase subunit alpha-A from Artemia franciscana (Brine shrimp).